Reading from the N-terminus, the 49-residue chain is MRVNITLACTECGERNYISSKNKRNNPERLELKKYCPRDRKVTLHRETK.

It belongs to the bacterial ribosomal protein bL33 family.

The protein is Large ribosomal subunit protein bL33B of Geobacillus thermodenitrificans (strain NG80-2).